Consider the following 321-residue polypeptide: MDLHESESRTHVLSTDGDDGYIDMEVNLSSSSSSSTSSSSFFSFPVTSSPPQSREFEFQMCSSAVASGESTTSPADELFYKGQLLPLHLPPRLKMVQKLLLASSSSTAATETPISPRAAADVLSPRRFSSCEIGQDENCFFEISTELKRFIESNENHLGNSWSKKIKHSSITQKLKASRAYIKALFSKQACSDSSEINPRFKIEPSKVSRKKNPFVNSENPLLIHRRSFSGVIQRHSQAKCSTSSSSSSSASSLSSSFSFGSNGSLDLQTLMRSSNASDNSIEGAIEHCKQSFTTRKSNVTESELCSSRTSVSTCGDLDKD.

Over residues 297-314 the composition is skewed to polar residues; sequence KSNVTESELCSSRTSVST. Positions 297 to 321 are disordered; that stretch reads KSNVTESELCSSRTSVSTCGDLDKD.

Its subcellular location is the cell membrane. The sequence is that of Probable membrane-associated kinase regulator 3 (MAKR3) from Arabidopsis thaliana (Mouse-ear cress).